A 186-amino-acid polypeptide reads, in one-letter code: Enhancer of split m7 protein (186 aa).

The bHLH domain occupies 13-68; it reads YRKVMKPLLERKRRARINKCLDELKDLMAECVAQTGDAKFEKADILEVTVQHLRKL. One can recognise an Orange domain in the interval 83-116; sequence FRAGYIRAANEVSRALASLPRVDVAFGTTLMTHL. Residues 183–186 carry the WRPW motif motif; it reads WRPW.

Transcription repression requires formation of a complex with a corepressor protein (Groucho). Forms homodimers.

Its subcellular location is the nucleus. Its function is as follows. Participates in the control of cell fate choice by uncommitted neuroectodermal cells in the embryo. Transcriptional repressor. Binds DNA on N-box motifs: 5'-CACNAG-3'. This is Enhancer of split m7 protein from Drosophila melanogaster (Fruit fly).